A 302-amino-acid chain; its full sequence is Homoserine O-acetyltransferase 1 (302 aa).

The active-site Acyl-thioester intermediate is C142. K163 and S192 together coordinate substrate. H235 serves as the catalytic Proton acceptor. E237 is an active-site residue. R249 contacts substrate.

This sequence belongs to the MetA family.

Its subcellular location is the cytoplasm. The enzyme catalyses L-homoserine + acetyl-CoA = O-acetyl-L-homoserine + CoA. It participates in amino-acid biosynthesis; L-methionine biosynthesis via de novo pathway; O-acetyl-L-homoserine from L-homoserine: step 1/1. Functionally, transfers an acetyl group from acetyl-CoA to L-homoserine, forming acetyl-L-homoserine. The chain is Homoserine O-acetyltransferase 1 from Ilyobacter polytropus (strain ATCC 51220 / DSM 2926 / LMG 16218 / CuHBu1).